Reading from the N-terminus, the 466-residue chain is Ribulose bisphosphate carboxylase large chain (466 aa).

N6,N6,N6-trimethyllysine is present on lysine 5. Substrate-binding residues include asparagine 114 and threonine 164. The active-site Proton acceptor is the lysine 166. A substrate-binding site is contributed by lysine 168. Mg(2+) contacts are provided by lysine 192, aspartate 194, and glutamate 195. Lysine 192 bears the N6-carboxylysine mark. Catalysis depends on histidine 285, which acts as the Proton acceptor. Arginine 286, histidine 318, and serine 370 together coordinate substrate.

Belongs to the RuBisCO large chain family. Type I subfamily. As to quaternary structure, heterohexadecamer of 8 large chains and 8 small chains; disulfide-linked. The disulfide link is formed within the large subunit homodimers. Requires Mg(2+) as cofactor. Post-translationally, the disulfide bond which can form in the large chain dimeric partners within the hexadecamer appears to be associated with oxidative stress and protein turnover.

Its subcellular location is the plastid. It is found in the chloroplast. It carries out the reaction 2 (2R)-3-phosphoglycerate + 2 H(+) = D-ribulose 1,5-bisphosphate + CO2 + H2O. It catalyses the reaction D-ribulose 1,5-bisphosphate + O2 = 2-phosphoglycolate + (2R)-3-phosphoglycerate + 2 H(+). Functionally, ruBisCO catalyzes two reactions: the carboxylation of D-ribulose 1,5-bisphosphate, the primary event in carbon dioxide fixation, as well as the oxidative fragmentation of the pentose substrate in the photorespiration process. Both reactions occur simultaneously and in competition at the same active site. The polypeptide is Ribulose bisphosphate carboxylase large chain (Moringa oleifera (Horseradish tree)).